A 258-amino-acid chain; its full sequence is Thiazole synthase (258 aa).

The Schiff-base intermediate with DXP role is filled by Lys-100. 1-deoxy-D-xylulose 5-phosphate contacts are provided by residues Gly-161, Ala-187 to Gly-188, and Asn-209 to Thr-210.

Belongs to the ThiG family. In terms of assembly, homotetramer. Forms heterodimers with either ThiH or ThiS.

Its subcellular location is the cytoplasm. The enzyme catalyses [ThiS sulfur-carrier protein]-C-terminal-Gly-aminoethanethioate + 2-iminoacetate + 1-deoxy-D-xylulose 5-phosphate = [ThiS sulfur-carrier protein]-C-terminal Gly-Gly + 2-[(2R,5Z)-2-carboxy-4-methylthiazol-5(2H)-ylidene]ethyl phosphate + 2 H2O + H(+). The protein operates within cofactor biosynthesis; thiamine diphosphate biosynthesis. Catalyzes the rearrangement of 1-deoxy-D-xylulose 5-phosphate (DXP) to produce the thiazole phosphate moiety of thiamine. Sulfur is provided by the thiocarboxylate moiety of the carrier protein ThiS. In vitro, sulfur can be provided by H(2)S. The chain is Thiazole synthase from Campylobacter jejuni subsp. jejuni serotype O:6 (strain 81116 / NCTC 11828).